A 61-amino-acid polypeptide reads, in one-letter code: Lens epithelial cell protein LEP503 (61 aa).

As to expression, preferentially expressed in the lens epithelial cells.

The sequence is that of Lens epithelial cell protein LEP503 (Lenep) from Rattus norvegicus (Rat).